The sequence spans 548 residues: Probable malate:quinone oxidoreductase (548 aa).

The tract at residues 522 to 548 (KPQAADSTPKAQLKPQPARKEVADIAL) is disordered. Residues 539–548 (ARKEVADIAL) are compositionally biased toward basic and acidic residues.

Belongs to the MQO family. Requires FAD as cofactor.

The enzyme catalyses (S)-malate + a quinone = a quinol + oxaloacetate. It participates in carbohydrate metabolism; tricarboxylic acid cycle; oxaloacetate from (S)-malate (quinone route): step 1/1. In Escherichia fergusonii (strain ATCC 35469 / DSM 13698 / CCUG 18766 / IAM 14443 / JCM 21226 / LMG 7866 / NBRC 102419 / NCTC 12128 / CDC 0568-73), this protein is Probable malate:quinone oxidoreductase.